Reading from the N-terminus, the 117-residue chain is Small ribosomal subunit protein bS6 (117 aa).

Positions 97-117 are disordered; that stretch reads TEEPSAILTKKDDRRGRRERN.

This sequence belongs to the bacterial ribosomal protein bS6 family.

Functionally, binds together with bS18 to 16S ribosomal RNA. This is Small ribosomal subunit protein bS6 from Maricaulis maris (strain MCS10) (Caulobacter maris).